Reading from the N-terminus, the 160-residue chain is Cytochrome b6-f complex subunit 4 (160 aa).

3 helical membrane-spanning segments follow: residues 36-56, 95-115, and 131-151; these read LLYIFPVVILGTIACNVGLAV, LLGVLLMVSVPTGLLTVPFLE, and TVFLIGTAVALWLGIGATLPI.

It belongs to the cytochrome b family. PetD subfamily. The 4 large subunits of the cytochrome b6-f complex are cytochrome b6, subunit IV (17 kDa polypeptide, petD), cytochrome f and the Rieske protein, while the 4 small subunits are petG, petL, petM and petN. The complex functions as a dimer.

It is found in the plastid. Its subcellular location is the chloroplast thylakoid membrane. Functionally, component of the cytochrome b6-f complex, which mediates electron transfer between photosystem II (PSII) and photosystem I (PSI), cyclic electron flow around PSI, and state transitions. The protein is Cytochrome b6-f complex subunit 4 of Saccharum hybrid (Sugarcane).